The following is a 252-amino-acid chain: tRNA1(Val) (adenine(37)-N6)-methyltransferase (252 aa).

This sequence belongs to the methyltransferase superfamily. tRNA (adenine-N(6)-)-methyltransferase family.

Its subcellular location is the cytoplasm. It carries out the reaction adenosine(37) in tRNA1(Val) + S-adenosyl-L-methionine = N(6)-methyladenosine(37) in tRNA1(Val) + S-adenosyl-L-homocysteine + H(+). In terms of biological role, specifically methylates the adenine in position 37 of tRNA(1)(Val) (anticodon cmo5UAC). This is tRNA1(Val) (adenine(37)-N6)-methyltransferase from Proteus mirabilis (strain HI4320).